We begin with the raw amino-acid sequence, 59 residues long: U17-myrmicitoxin-Tb1f (59 aa).

The signal sequence occupies residues 1-27 (MEKNRTTTFSVYLTIILFLISTFITMV). A propeptide spanning residues 28 to 31 (ITES) is cleaved from the precursor. Residue histidine 58 is modified to Histidine amide.

In terms of tissue distribution, expressed by the venom gland.

The protein localises to the secreted. This is U17-myrmicitoxin-Tb1f from Tetramorium bicarinatum (Tramp ant).